Reading from the N-terminus, the 295-residue chain is Nucleotide-binding protein LSEI_0959 (295 aa).

Position 12–19 (12–19) interacts with ATP; sequence GMSGAGKT. 62 to 65 contacts GTP; the sequence is DLRS.

This sequence belongs to the RapZ-like family.

Its function is as follows. Displays ATPase and GTPase activities. This chain is Nucleotide-binding protein LSEI_0959, found in Lacticaseibacillus paracasei (strain ATCC 334 / BCRC 17002 / CCUG 31169 / CIP 107868 / KCTC 3260 / NRRL B-441) (Lactobacillus paracasei).